Here is a 247-residue protein sequence, read N- to C-terminus: Proteasome subunit alpha (247 aa).

Belongs to the peptidase T1A family. The 20S proteasome core is composed of 14 alpha and 14 beta subunits that assemble into four stacked heptameric rings, resulting in a barrel-shaped structure. The two inner rings, each composed of seven catalytic beta subunits, are sandwiched by two outer rings, each composed of seven alpha subunits. The catalytic chamber with the active sites is on the inside of the barrel. Has a gated structure, the ends of the cylinder being occluded by the N-termini of the alpha-subunits. Is capped at one or both ends by the proteasome regulatory ATPase, PAN.

Its subcellular location is the cytoplasm. With respect to regulation, the formation of the proteasomal ATPase PAN-20S proteasome complex, via the docking of the C-termini of PAN into the intersubunit pockets in the alpha-rings, triggers opening of the gate for substrate entry. Interconversion between the open-gate and close-gate conformations leads to a dynamic regulation of the 20S proteasome proteolysis activity. Component of the proteasome core, a large protease complex with broad specificity involved in protein degradation. The protein is Proteasome subunit alpha of Methanosarcina thermophila.